The following is a 185-amino-acid chain: Signal peptidase complex subunit 3 (185 aa).

Over 1–16 (MHTSIQRIQQTFSQAS) the chain is Cytoplasmic. A helical; Signal-anchor for type II membrane protein membrane pass occupies residues 17-37 (TVLSIIAAIVFVVSYIQLVVA). At 38-185 (NVWSLPEANF…KGSIKFPQLV (148 aa)) the chain is on the lumenal side. The N-linked (GlcNAc...) asparagine glycan is linked to Asn-151.

The protein belongs to the SPCS3 family. In terms of assembly, component of the signal peptidase complex (SPC) composed of a catalytic subunit SEC11 and three accessory subunits SPC1, SPC2 and SPC3. The complex induces a local thinning of the ER membrane which is used to measure the length of the signal peptide (SP) h-region of protein substrates. This ensures the selectivity of the complex towards h-regions shorter than 18-20 amino acids. SPC associates with the translocon complex.

It localises to the endoplasmic reticulum membrane. Essential component of the signal peptidase complex (SPC) which catalyzes the cleavage of N-terminal signal sequences from nascent proteins as they are translocated into the lumen of the endoplasmic reticulum. Essential for the SPC catalytic activity, possibly by stabilizing and positioning the active center of the complex close to the lumenal surface. Essential for viability. In Yarrowia lipolytica (strain CLIB 122 / E 150) (Yeast), this protein is Signal peptidase complex subunit 3 (SPC3).